The sequence spans 948 residues: UvrABC system protein A (948 aa).

Glycine 33–serine 40 contributes to the ATP binding site. Residues cysteine 252–cysteine 279 form a C4-type zinc finger. 2 consecutive ABC transporter domains span residues tryptophan 309–leucine 587 and alanine 607–lysine 935. Glycine 639 to serine 646 provides a ligand contact to ATP. The C4-type zinc-finger motif lies at cysteine 738–cysteine 764.

Belongs to the ABC transporter superfamily. UvrA family. As to quaternary structure, forms a heterotetramer with UvrB during the search for lesions.

Its subcellular location is the cytoplasm. The UvrABC repair system catalyzes the recognition and processing of DNA lesions. UvrA is an ATPase and a DNA-binding protein. A damage recognition complex composed of 2 UvrA and 2 UvrB subunits scans DNA for abnormalities. When the presence of a lesion has been verified by UvrB, the UvrA molecules dissociate. This Staphylococcus aureus (strain MRSA252) protein is UvrABC system protein A.